Reading from the N-terminus, the 382-residue chain is uncharacterized protein (382 aa).

A run of 12 helical transmembrane segments spans residues 14–34 (GLLL…LWLA), 45–65 (MVSS…GYLI), 75–95 (YLAS…VGFW), 102–122 (FIAG…LMCS), 131–151 (LLAA…LLVS), 157–177 (LLHV…PLLF), 204–224 (LGVN…GLMP), 235–255 (ASIG…QWPV), 265–284 (LLVL…VMLT), 289–311 (APAL…AWAC), 325–345 (ALLL…AMLM), and 349–369 (SDNL…LMLL).

The protein belongs to the major facilitator superfamily. YcaD (TC 2.A.1.26) family.

Its subcellular location is the cell inner membrane. This is an uncharacterized protein from Salmonella arizonae (strain ATCC BAA-731 / CDC346-86 / RSK2980).